We begin with the raw amino-acid sequence, 466 residues long: Hydroxyacid-oxoacid transhydrogenase, mitochondrial (466 aa).

N6-acetyllysine is present on Lys444. Residue Ser451 is modified to Phosphoserine.

It belongs to the iron-containing alcohol dehydrogenase family. Hydroxyacid-oxoacid transhydrogenase subfamily.

The protein resides in the mitochondrion. It catalyses the reaction (S)-3-hydroxybutanoate + 2-oxoglutarate = (R)-2-hydroxyglutarate + acetoacetate. The catalysed reaction is 4-hydroxybutanoate + 2-oxoglutarate = (R)-2-hydroxyglutarate + succinate semialdehyde. Its function is as follows. Catalyzes the cofactor-independent reversible oxidation of gamma-hydroxybutyrate (GHB) to succinic semialdehyde (SSA) coupled to reduction of 2-ketoglutarate (2-KG) to D-2-hydroxyglutarate (D-2-HG). L-3-hydroxybutyrate (L-3-OHB) is also a substrate for HOT when using 2-KG as hydrogen acceptor, resulting in the formation of D-2-HG. The polypeptide is Hydroxyacid-oxoacid transhydrogenase, mitochondrial (ADHFE1) (Bos taurus (Bovine)).